The primary structure comprises 362 residues: MQKIKVLCVDDSALIRSLMTEIINGQPDMTVVATAPDPLVARELIKQHNPDVLTLDVEMPRMDGLDFLEKLMRLRPMPVVMVSSLTERGNEITLRALELGAVDFVTKPKVGIRDGMLDYSEKLADKIRAAARARVRQSAPVQHAAAHAAHAPVGAAPLFNNPLLSTEKLIIVGASTGGTEAIREVLVPLPPDAPAVLIAQHMPPGFTKSFAQRLNGLCRITVKEAEHGERVLPGHAYIAPGHAHLLLARSGANYIAHLSDEPPVNRHRPSVDVLFRSAAQHAGKNAVGVILTGMGRDGAAGLLDMKKAGAYTLAQDEASCIVFGMPREAIALGAADEIASLPEMSRRVMARLSSMGDRVQRV.

The region spanning Lys-5–Lys-122 is the Response regulatory domain. At Asp-56 the chain carries 4-aspartylphosphate. Residues Leu-163–Met-355 form the CheB-type methylesterase domain. Catalysis depends on residues Ser-175, His-201, and Asp-297.

The protein belongs to the CheB family. In terms of processing, phosphorylated by CheA. Phosphorylation of the N-terminal regulatory domain activates the methylesterase activity.

The protein localises to the cytoplasm. It catalyses the reaction [protein]-L-glutamate 5-O-methyl ester + H2O = L-glutamyl-[protein] + methanol + H(+). The catalysed reaction is L-glutaminyl-[protein] + H2O = L-glutamyl-[protein] + NH4(+). In terms of biological role, involved in chemotaxis. Part of a chemotaxis signal transduction system that modulates chemotaxis in response to various stimuli. Catalyzes the demethylation of specific methylglutamate residues introduced into the chemoreceptors (methyl-accepting chemotaxis proteins or MCP) by CheR. Also mediates the irreversible deamidation of specific glutamine residues to glutamic acid. This Paraburkholderia xenovorans (strain LB400) protein is Protein-glutamate methylesterase/protein-glutamine glutaminase.